Reading from the N-terminus, the 434-residue chain is Glutamate-1-semialdehyde 2,1-aminomutase 1 (434 aa).

The residue at position 270 (Lys-270) is an N6-(pyridoxal phosphate)lysine.

The protein belongs to the class-III pyridoxal-phosphate-dependent aminotransferase family. HemL subfamily. As to quaternary structure, homodimer. The cofactor is pyridoxal 5'-phosphate.

Its subcellular location is the cytoplasm. It catalyses the reaction (S)-4-amino-5-oxopentanoate = 5-aminolevulinate. It functions in the pathway porphyrin-containing compound metabolism; protoporphyrin-IX biosynthesis; 5-aminolevulinate from L-glutamyl-tRNA(Glu): step 2/2. The polypeptide is Glutamate-1-semialdehyde 2,1-aminomutase 1 (Bacillus thuringiensis (strain Al Hakam)).